Consider the following 335-residue polypeptide: Anthranilate phosphoribosyltransferase (335 aa).

Residues Gly79, 82–83, Ser87, 89–92, 107–115, and Ser119 contribute to the 5-phospho-alpha-D-ribose 1-diphosphate site; these read GD, NIST, and KHGNRSITS. Residue Gly79 participates in anthranilate binding. Ser91 is a Mg(2+) binding site. Asn110 lines the anthranilate pocket. Residue Arg165 coordinates anthranilate. Mg(2+)-binding residues include Asp224 and Glu225.

Belongs to the anthranilate phosphoribosyltransferase family. Homodimer. Mg(2+) is required as a cofactor.

It catalyses the reaction N-(5-phospho-beta-D-ribosyl)anthranilate + diphosphate = 5-phospho-alpha-D-ribose 1-diphosphate + anthranilate. It participates in amino-acid biosynthesis; L-tryptophan biosynthesis; L-tryptophan from chorismate: step 2/5. Catalyzes the transfer of the phosphoribosyl group of 5-phosphorylribose-1-pyrophosphate (PRPP) to anthranilate to yield N-(5'-phosphoribosyl)-anthranilate (PRA). The sequence is that of Anthranilate phosphoribosyltransferase from Lactococcus lactis subsp. lactis (strain IL1403) (Streptococcus lactis).